Consider the following 66-residue polypeptide: Large ribosomal subunit protein uL29 (66 aa).

It belongs to the universal ribosomal protein uL29 family.

The protein is Large ribosomal subunit protein uL29 of Caldanaerobacter subterraneus subsp. tengcongensis (strain DSM 15242 / JCM 11007 / NBRC 100824 / MB4) (Thermoanaerobacter tengcongensis).